A 417-amino-acid chain; its full sequence is Ig-like V-type domain-containing protein FAM187A (417 aa).

The N-terminal stretch at 1–18 is a signal peptide; sequence MSLAHTTVLLWAWGSLQA. Residues 19–377 are Extracellular-facing; it reads FEIVEKESVF…ASLSDPETRT (359 aa). N-linked (GlcNAc...) asparagine glycosylation is found at asparagine 248 and asparagine 318. The Ig-like V-type domain occupies 268 to 362; it reads PWVPQVPIQF…IAGFRLGVIT (95 aa). Cysteine 290 and cysteine 346 form a disulfide bridge. The chain crosses the membrane as a helical span at residues 378–398; that stretch reads AIELTLMGYLLITIFFITIHL. Topologically, residues 399 to 417 are cytoplasmic; that stretch reads CRCCCQSRCCPNFSAQTLL.

The protein belongs to the FAM187 family.

The protein localises to the membrane. This is Ig-like V-type domain-containing protein FAM187A (Fam187a) from Mus musculus (Mouse).